Consider the following 487-residue polypeptide: Glutamyl-tRNA(Gln) amidotransferase subunit A (487 aa).

Active-site charge relay system residues include Lys-77 and Ser-152. Ser-176 (acyl-ester intermediate) is an active-site residue.

Belongs to the amidase family. GatA subfamily. Heterotrimer of A, B and C subunits.

The catalysed reaction is L-glutamyl-tRNA(Gln) + L-glutamine + ATP + H2O = L-glutaminyl-tRNA(Gln) + L-glutamate + ADP + phosphate + H(+). In terms of biological role, allows the formation of correctly charged Gln-tRNA(Gln) through the transamidation of misacylated Glu-tRNA(Gln) in organisms which lack glutaminyl-tRNA synthetase. The reaction takes place in the presence of glutamine and ATP through an activated gamma-phospho-Glu-tRNA(Gln). The chain is Glutamyl-tRNA(Gln) amidotransferase subunit A from Limosilactobacillus fermentum (strain NBRC 3956 / LMG 18251) (Lactobacillus fermentum).